Consider the following 618-residue polypeptide: DELLA protein SLN1 (618 aa).

Positions 1–36 are disordered; it reads MKREYQDGGGSGGGGDEMGSSRDKMMVSSSEAGEGE. Positions 7–17 are enriched in gly residues; it reads DGGGSGGGGDE. The DELLA motif signature appears at 39–43; sequence DELLA. 2 disordered regions span residues 106-137 and 159-197; these read LNAP…YFDL and APAD…GAAR. The segment covering 108 to 118 has biased composition (pro residues); that stretch reads APPPPLPPAPP. Composition is skewed to low complexity over residues 119-128 and 176-197; these read QLNASTSSTV and TGGS…GAAR. A GRAS domain is found at 221–614; it reads VDTQEAGIRL…RPLIATSAWR (394 aa). The segment at 228 to 284 is leucine repeat I (LRI); the sequence is IRLVHALLACAEAVQQENLSAAEALVKQIPLLAASQGGAMRKVAAYFGEALARRVFR. Residues 235–239 carry the LxCxE motif motif; the sequence is LACAE. The VHIID stretch occupies residues 303 to 368; the sequence is HAHFYESCPY…GGPPSFRLTG (66 aa). Positions 334 to 338 match the VHIID motif; sequence VHVVD. The segment at 382 to 421 is leucine repeat II (LRII); sequence QVGWKLAQFAHTIRVDFQYRGLVAATLADLEPFMLQPEGE. Residues 431-535 are PFYRE; that stretch reads IAVNSVFEMH…EVYLGRQICN (105 aa). The SAW stretch occupies residues 538 to 614; sequence ACEGTERTER…RPLIATSAWR (77 aa).

The protein belongs to the GRAS family. DELLA subfamily. In terms of processing, phosphorylated. Post-translationally, ubiquitinated. Upon GA application it is ubiquitinated, leading to its subsequent degradation. Apparently restricted to regions where growth is occurring in the leaf blade. Localizes almost exclusively to the basal elongation zone (EZ) for the elongating blades of L1, L2 and L3. More detailed fractionation of the L3 blade shows that in cv. Himalaya, it is preferentially localized to the basal third of the EZ, but its presence can still be detected toward the end of the EZ (at protein level).

It is found in the nucleus. Its function is as follows. Probable transcriptional regulator that acts as a repressor of the gibberellin (GA) signaling pathway. Probably acts by participating in large multiprotein complexes that repress transcription of GA-inducible genes. Upon GA application, it is degraded by the proteasome, allowing the GA signaling pathway. Acts as a negative regulator of GAMYB gene expression. This chain is DELLA protein SLN1 (SLN1), found in Hordeum vulgare (Barley).